The sequence spans 89 residues: Bombyxin B-1 (89 aa).

The first 19 residues, 1–19, serve as a signal peptide directing secretion; that stretch reads MKTSVMFMLVIVISLMCSG. 3 cysteine pairs are disulfide-bonded: Cys-29–Cys-75, Cys-41–Cys-88, and Cys-74–Cys-79. A propeptide spans 48–66 (c peptide like); sequence GGAQYAPYFWTRQYLGSRG.

The protein belongs to the insulin family. In terms of assembly, heterodimer of a B chain and an A chain linked by two disulfide bonds.

It is found in the secreted. Brain peptide responsible for activation of prothoracic glands to produce ecdysone in insects. The protein is Bombyxin B-1 (BBXB1) of Bombyx mori (Silk moth).